The following is a 333-amino-acid chain: MLKGTFFCVDAHTCGNPVRLVTSGHPDLKGRTMSEKRQDFLAQYDWIRKALMFEPRGHDMMSGAFLYPPCSDNADAAILFIETSGCLPMCGHGTIGTITAALESGLLTPKMPGQLTIDVPAGQIKVQYQQTGAKVDWVKIFNVPAYLAHKDVVLDIPGLGPLKIDVSYGGNYYAIVDPQANFPGLRHWSAGDILRWSPIVREVAHRELNCVHPDDPTVNGVSHVLWTGDTISEGSNGANAVFYGDKAIDRSPCGTGTSARLAQLYSRGELKVGDEYTHESIIGSQFVGRIEAATKVGAFDAIMPSIKGWARITGHNAITVDDNDPYAFGFQVV.

C90 functions as the Proton acceptor in the catalytic mechanism. Substrate contacts are provided by residues 91 to 92 (GH), H223, and D249. The active-site Proton donor is C253. Residue 254–255 (GT) participates in substrate binding.

The protein belongs to the proline racemase family.

The catalysed reaction is trans-4-hydroxy-L-proline = cis-4-hydroxy-D-proline. In terms of biological role, catalyzes the epimerization of trans-4-hydroxy-L-proline (t4LHyp) to cis-4-hydroxy-D-proline (c4DHyp). Is likely involved in a degradation pathway that converts t4LHyp to alpha-ketoglutarate. Displays no proline racemase activity. In Shewanella loihica (strain ATCC BAA-1088 / PV-4), this protein is 4-hydroxyproline 2-epimerase.